The chain runs to 88 residues: Small ribosomal subunit protein uS15 (88 aa).

The protein belongs to the universal ribosomal protein uS15 family. Part of the 30S ribosomal subunit. Forms a bridge to the 50S subunit in the 70S ribosome, contacting the 23S rRNA.

Functionally, one of the primary rRNA binding proteins, it binds directly to 16S rRNA where it helps nucleate assembly of the platform of the 30S subunit by binding and bridging several RNA helices of the 16S rRNA. In terms of biological role, forms an intersubunit bridge (bridge B4) with the 23S rRNA of the 50S subunit in the ribosome. In Mesoplasma florum (strain ATCC 33453 / NBRC 100688 / NCTC 11704 / L1) (Acholeplasma florum), this protein is Small ribosomal subunit protein uS15.